Consider the following 98-residue polypeptide: Bombyxin E-1 (98 aa).

The N-terminal stretch at 1–19 is a signal peptide; sequence MNRPVFLVLLLTGFLCIAA. Gln-20 carries the pyrrolidone carboxylic acid modification. Disulfide bonds link Cys-29-Cys-85, Cys-41-Cys-98, and Cys-84-Cys-89. A propeptide spans 50–75 (c peptide like); it reads SESSLASYSSRGWPWLPTPNFNKRAI.

This sequence belongs to the insulin family. As to quaternary structure, heterodimer of a B chain and an A chain linked by two disulfide bonds.

The protein resides in the secreted. Functionally, PTTH is a brain peptide responsible for activation of prothoracic glands to produce ecdysone in insects. In Bombyx mori (Silk moth), this protein is Bombyxin E-1 (BBXE1).